A 677-amino-acid polypeptide reads, in one-letter code: High-affinity choline transport protein (677 aa).

12 helical membrane-spanning segments follow: residues 15–35 (PVVF…TILF), 54–74 (FGWY…CIAC), 94–114 (LSWA…FFSV), 144–164 (FHYG…LGYF), 196–216 (IAAV…GVVQ), 233–253 (AKAA…TSGV), 265–285 (VALA…SFLL), 319–339 (WTLF…LFLA), 350–370 (FVLG…SVFG), 412–432 (VATI…ALVL), 452–472 (VFWS…NGIS), and 477–497 (TTVI…AGLY).

The protein belongs to the BCCT transporter (TC 2.A.15) family.

Its subcellular location is the cell inner membrane. The catalysed reaction is choline(in) + H(+)(in) = choline(out) + H(+)(out). The protein operates within amine and polyamine biosynthesis; betaine biosynthesis via choline pathway. High-affinity uptake of choline driven by a proton-motive force. This Escherichia coli O157:H7 protein is High-affinity choline transport protein (betT).